The following is a 297-amino-acid chain: Hydroxysqualene synthase (297 aa).

Belongs to the phytoene/squalene synthase family. HpnC subfamily.

The enzyme catalyses presqualene diphosphate + H2O = hydroxysqualene + diphosphate. It functions in the pathway secondary metabolite biosynthesis; hopanoid biosynthesis. Its function is as follows. Involved in the biosynthesis of the hopanoid precursor squalene (SQ) from farnesyl diphosphate (FPP). Catalyzes the second step, the conversion of presqualene diphosphate (PSPP) to hydroxysqualene (HSQ). This Zymomonas mobilis subsp. mobilis (strain ATCC 31821 / ZM4 / CP4) protein is Hydroxysqualene synthase.